Reading from the N-terminus, the 332-residue chain is MGSSGSMVKPISGFLTALIQYPVPVVESRADIDKQIQQIIKTIHSTKSGYPGLELIVFPEYSTQGLNTKKWTTEEFLCTVPGPETDLFAEACKESKVYGVFSIMEKNPDGGEPYNTAVIIDPQGEMILKYRKLNPWVPVEPWKAGDLGLPVCDGPGGSKLAVCICHDGMFPEVAREAAYKGANVLIRISGYSTQVSEQWMLTNRSNAWQNLMYTLSVNLAGYDGVFYYFGEGQVCNFDGTTLVQGHRNPWEIVTAEVYPELADQARLGWGLENNIYNLGSRGYVATPGGVKENPYTFVKDLAEGKYKVPWEDEIKVKDGSIYGYPVKKTIHS.

In terms of domain architecture, CN hydrolase spans 14–259; that stretch reads FLTALIQYPV…WEIVTAEVYP (246 aa). E60 serves as the catalytic Proton acceptor. Catalysis depends on K132, which acts as the Proton donor. The active-site Nucleophile is C165.

Belongs to the carbon-nitrogen hydrolase superfamily. Aliphatic amidase family.

It catalyses the reaction formamide + H2O = formate + NH4(+). In terms of biological role, is an aliphatic amidase with a restricted substrate specificity, as it only hydrolyzes formamide. In Bacillus cereus (strain B4264), this protein is Formamidase.